A 225-amino-acid chain; its full sequence is Ribonuclease HII (225 aa).

One can recognise an RNase H type-2 domain in the interval 2–210 (GIVVGVDEAG…VRKLGGPWRS (209 aa)). Residues aspartate 8, glutamate 9, and aspartate 107 each contribute to the a divalent metal cation site.

The protein belongs to the RNase HII family. Mn(2+) is required as a cofactor. The cofactor is Mg(2+).

It localises to the cytoplasm. It catalyses the reaction Endonucleolytic cleavage to 5'-phosphomonoester.. Endonuclease that specifically degrades the RNA of RNA-DNA hybrids. The protein is Ribonuclease HII (rnhB) of Aeropyrum pernix (strain ATCC 700893 / DSM 11879 / JCM 9820 / NBRC 100138 / K1).